Here is a 774-residue protein sequence, read N- to C-terminus: Two pore channel protein 2 (774 aa).

Over 1–92 (MEEEPLLAGS…GSLRLYRWYY (92 aa)) the chain is Cytoplasmic. Residues 93 to 113 (SNLCQWGLGLTIAVVLALAFI) form a helical membrane-spanning segment. At 114 to 140 (ERPSSLTYTSDIRVKPKPWEPPCGMTE) the chain is on the extracellular side. A helical transmembrane segment spans residues 141–161 (GIEIVCLCIFILDVTAKGYLI). The Cytoplasmic portion of the chain corresponds to 162-170 (GWEEFRMNK). Residues 171–191 (WLLAYLIVITASVIDWMLSIS) traverse the membrane as a helical segment. Over 192-197 (MLCDEN) the chain is Extracellular. Residues 198 to 218 (LRVRRLIRPFFLLQNSSLMKK) traverse the membrane as a helical segment. Residues 217 to 221 (KKTLK) form an interaction with phosphatidylinositol 3,5-bisphosphate region. The Cytoplasmic portion of the chain corresponds to 219–232 (TLKCIKRTLPEIAS). Residues 233-253 (VILLLALHICLFTMIGMLIFA) form a helical membrane-spanning segment. Over 254-267 (KSDDPKQNGEWQTY) the chain is Extracellular. Positions 268–292 (FRNLPKALSSLLVLLTTANNPDVMI) form an intramembrane region, helical; Pore-forming. Residues 293 to 302 (PAYSLNRGYS) lie on the Extracellular side of the membrane. Residues 303 to 323 (IFFILFSVFGTYLLMNLMTAI) traverse the membrane as a helical segment. Residues 324–452 (IYNQFRGYLL…YVYSHYYISV (129 aa)) are Cytoplasmic-facing. A helical membrane pass occupies residues 453–475 (LGNAVALANVICICTVLVLNAEK). Over 476–486 (SASEKNYFYME) the chain is Extracellular. Residues 487–507 (IINCIFILYYLIEMLLKIVAF) traverse the membrane as a helical segment. The Cytoplasmic segment spans residues 508–518 (GWKGYLSYRNN). A helical membrane pass occupies residues 519 to 539 (IFDGFLTVLLLAIQIVIFITF). The Extracellular segment spans residues 540–564 (KIPYVDVDPVPRHVMALWEMIRLVN). A helical membrane pass occupies residues 565 to 585 (MLIVFRFLRIIPEIKLMAVVA). Residues 586–596 (STIVDLVKNLR) are Cytoplasmic-facing. Residues 597–617 (AFAGILLVVYYMFAVLGIWLF) traverse the membrane as a helical segment. Topologically, residues 618–658 (QGAISPPSNMSLVSNSSLENITGPYSMECGTFEQLEYWPNN) are extracellular. Residues N626, N632, and N637 are each glycosylated (N-linked (GlcNAc...) asparagine). Residues 659-681 (FDDFASSLILLYNIMVVNNWHVF) constitute an intramembrane region (helical; Pore-forming). Residues 682 to 696 (TDAYARYTTDWSLVY) lie on the Extracellular side of the membrane. Residues 697–717 (FVVWWLTSSVMWVNLFVALIL) form a helical membrane-spanning segment. Over 718–774 (ENFTYKWDRSNGLSVEDVERIAYQSTVQLMFKEHVKEPTEEELLAQLHQHPHLHLSW) the chain is Cytoplasmic.

This sequence belongs to the calcium channel alpha-1 subunit (TC 1.A.1.11) family. Two pore calcium channel subfamily. As to quaternary structure, homodimer. N-glycosylated.

The protein localises to the late endosome membrane. The protein resides in the lysosome membrane. It carries out the reaction Na(+)(in) = Na(+)(out). The enzyme catalyses Ca(2+)(in) = Ca(2+)(out). Intracellular channel initially characterized as a non-selective Ca(2+)-permeable channel activated by NAADP (nicotinic acid adenine dinucleotide phosphate), it is also a highly-selective Na(+) channel activated directly by PI(3,5)P2 (phosphatidylinositol 3,5-bisphosphate). Localizes to the lysosomal and late endosome membranes where it regulates organellar membrane excitability, membrane trafficking, and pH homeostasis. The polypeptide is Two pore channel protein 2 (tpcn2) (Danio rerio (Zebrafish)).